We begin with the raw amino-acid sequence, 1364 residues long: Trifunctional purine biosynthetic protein adenosine-3 (1364 aa).

The 208-residue stretch at 114-321 (KDFMLRHGIP…LFEVMQACCS (208 aa)) folds into the ATP-grasp domain. An ATP-binding site is contributed by 140-202 (IRSAPYQALV…EELLEGEEIS (63 aa)). Residues Glu-291 and Asn-293 each contribute to the Mn(2+) site. Positions 435 to 1154 (AIATAPGLSY…ARTQRMLSQP (720 aa)) are AIRS. The tract at residues 1155–1364 (RKRVAVLISG…EAPKDIKDSQ (210 aa)) is GART. Position 1166–1168 (1166–1168 (GSN)) interacts with N(1)-(5-phospho-beta-D-ribosyl)glycinamide. Residues Arg-1221, 1246 to 1249 (MRIL), and Asn-1263 each bind (6R)-10-formyltetrahydrofolate. His-1265 functions as the Proton donor in the catalytic mechanism. Position 1297–1301 (1297–1301 (DEGVD)) interacts with (6R)-10-formyltetrahydrofolate. 1327–1330 (HYAE) serves as a coordination point for N(1)-(5-phospho-beta-D-ribosyl)glycinamide.

In the N-terminal section; belongs to the GARS family. It in the central section; belongs to the AIR synthase family. The protein in the C-terminal section; belongs to the GART family.

It catalyses the reaction 5-phospho-beta-D-ribosylamine + glycine + ATP = N(1)-(5-phospho-beta-D-ribosyl)glycinamide + ADP + phosphate + H(+). The catalysed reaction is 2-formamido-N(1)-(5-O-phospho-beta-D-ribosyl)acetamidine + ATP = 5-amino-1-(5-phospho-beta-D-ribosyl)imidazole + ADP + phosphate + H(+). The enzyme catalyses N(1)-(5-phospho-beta-D-ribosyl)glycinamide + (6R)-10-formyltetrahydrofolate = N(2)-formyl-N(1)-(5-phospho-beta-D-ribosyl)glycinamide + (6S)-5,6,7,8-tetrahydrofolate + H(+). The protein operates within purine metabolism; IMP biosynthesis via de novo pathway; 5-amino-1-(5-phospho-D-ribosyl)imidazole from N(2)-formyl-N(1)-(5-phospho-D-ribosyl)glycinamide: step 2/2. It functions in the pathway purine metabolism; IMP biosynthesis via de novo pathway; N(1)-(5-phospho-D-ribosyl)glycinamide from 5-phospho-alpha-D-ribose 1-diphosphate: step 2/2. It participates in purine metabolism; IMP biosynthesis via de novo pathway; N(2)-formyl-N(1)-(5-phospho-D-ribosyl)glycinamide from N(1)-(5-phospho-D-ribosyl)glycinamide (10-formyl THF route): step 1/1. Its function is as follows. Trifunctional enzyme required for de novo purine biosynthesis. This Drosophila pseudoobscura pseudoobscura (Fruit fly) protein is Trifunctional purine biosynthetic protein adenosine-3 (ade3).